The sequence spans 113 residues: uncharacterized protein (113 aa).

This is an uncharacterized protein from Ureaplasma parvum serovar 3 (strain ATCC 700970).